The sequence spans 956 residues: Chromatin assembly factor 1 subunit A (956 aa).

A binds to PCNA region spans residues 1 to 49 (MLEELECGAPGARGAATAMDCKDRPAFPVKKLIQARLPFKRLNLVPKGK). The binds to CBX1 chromo shadow domain stretch occupies residues 1–314 (MLEELECGAP…QHSSTSPFPT (314 aa)). 2 disordered regions span residues 45 to 65 (VPKG…QSKS) and 122 to 155 (DSNE…EDTG). Residues 56–65 (DQGTSVQSKS) are compositionally biased toward polar residues. 5 positions are modified to phosphoserine: Ser-65, Ser-123, Ser-138, Ser-141, and Ser-143. A Glycyl lysine isopeptide (Lys-Gly) (interchain with G-Cter in SUMO1); alternate cross-link involves residue Lys-182. Residue Lys-182 forms a Glycyl lysine isopeptide (Lys-Gly) (interchain with G-Cter in SUMO2); alternate linkage. The disordered stretch occupies residues 188–222 (VGCGGAGRRGDSQECSPRSCPELTSGPRMCPRKEQ). Phosphoserine occurs at positions 206 and 224. Positions 233-246 (FKGKVPMVVLQDIL) match the PxVxL motif motif. 2 disordered regions span residues 250–432 (PPQI…KRLR) and 599–639 (DSDE…VPHG). Low complexity-rich tracts occupy residues 282–296 (LSHS…TSSP) and 307–317 (SSTSPFPTSTP). Residue Ser-310 is modified to Phosphoserine. Positions 329 to 432 (STEKNKLRLQ…RKKEEEKRLR (104 aa)) are enriched in basic and acidic residues. Composition is skewed to acidic residues over residues 599–610 (DSDEEWEEEEPG) and 618–633 (GDDD…EDDG). Residues 642–678 (SEDEGVTEECADPENHKVRQKLKAKEWDEFLAKGKRF) form a necessary for homodimerization and competence for chromatin assembly region. The interval 660-956 (RQKLKAKEWD…TLTASPLGAS (297 aa)) is binds to p60. A Phosphothreonine modification is found at Thr-722. The disordered stretch occupies residues 765–790 (LLSNHTGSPRSPSTTYLHTPTPSEDA). A compositionally biased stretch (polar residues) spans 767–786 (SNHTGSPRSPSTTYLHTPTP). Ser-772, Ser-775, and Ser-803 each carry phosphoserine. Disordered regions lie at residues 844–873 (SVPS…KRKS) and 933–956 (SGAG…LGAS). Residues 855–866 (SVPSTGPSQGTP) show a composition bias toward polar residues. Thr-865 carries the post-translational modification Phosphothreonine. Phosphoserine occurs at positions 868, 873, and 951.

It belongs to the CHAF1A family. As to quaternary structure, homodimer. Part of the CAF-1 complex that contains RBBP4, CHAF1B and CHAF1A. CHAF1A binds directly to CHAF1B. Only minor amounts of RBBP4 are complexed with CHAF1A and CHAF1B in G1 phase. Interacts with PCNA; the interaction is direct. Interacts (via the PxVxL motif) with CBX5; the interaction is direct. Interacts with MBD1. Interacts with histones H3.1, H3.2 and H3.1t.

The protein resides in the nucleus. In terms of biological role, acts as a component of the histone chaperone complex chromatin assembly factor 1 (CAF-1), which assembles histone octamers onto DNA during replication and repair. CAF-1 performs the first step of the nucleosome assembly process, bringing newly synthesized histones H3 and H4 to replicating DNA; histones H2A/H2B can bind to this chromatin precursor subsequent to DNA replication to complete the histone octamer. It may play a role in heterochromatin maintenance in proliferating cells by bringing newly synthesized cbx proteins to heterochromatic DNA replication foci. The protein is Chromatin assembly factor 1 subunit A of Homo sapiens (Human).